An 81-amino-acid polypeptide reads, in one-letter code: Conotoxin Eb11.3 (81 aa).

The signal sequence occupies residues Met1–Gly23. 4 cysteine pairs are disulfide-bonded: Cys27-Cys41, Cys34-Cys48, Cys40-Cys56, and Cys47-Cys62. Residue Leu69 is modified to Leucine amide. The propeptide occupies Ala73–Arg81.

The protein belongs to the conotoxin I2 superfamily. Expressed by the venom duct.

The protein resides in the secreted. The protein is Conotoxin Eb11.3 of Conus eburneus (Ivory cone).